The primary structure comprises 259 residues: Phosphoribosylaminoimidazole-succinocarboxamide synthase (259 aa).

This sequence belongs to the SAICAR synthetase family.

The enzyme catalyses 5-amino-1-(5-phospho-D-ribosyl)imidazole-4-carboxylate + L-aspartate + ATP = (2S)-2-[5-amino-1-(5-phospho-beta-D-ribosyl)imidazole-4-carboxamido]succinate + ADP + phosphate + 2 H(+). It functions in the pathway purine metabolism; IMP biosynthesis via de novo pathway; 5-amino-1-(5-phospho-D-ribosyl)imidazole-4-carboxamide from 5-amino-1-(5-phospho-D-ribosyl)imidazole-4-carboxylate: step 1/2. In Zymomonas mobilis subsp. mobilis (strain ATCC 31821 / ZM4 / CP4), this protein is Phosphoribosylaminoimidazole-succinocarboxamide synthase.